A 369-amino-acid chain; its full sequence is Anhydro-N-acetylmuramic acid kinase (369 aa).

12-19 (GTSLDGVD) provides a ligand contact to ATP.

The protein belongs to the anhydro-N-acetylmuramic acid kinase family.

It catalyses the reaction 1,6-anhydro-N-acetyl-beta-muramate + ATP + H2O = N-acetyl-D-muramate 6-phosphate + ADP + H(+). It participates in amino-sugar metabolism; 1,6-anhydro-N-acetylmuramate degradation. Its pathway is cell wall biogenesis; peptidoglycan recycling. Its function is as follows. Catalyzes the specific phosphorylation of 1,6-anhydro-N-acetylmuramic acid (anhMurNAc) with the simultaneous cleavage of the 1,6-anhydro ring, generating MurNAc-6-P. Is required for the utilization of anhMurNAc either imported from the medium or derived from its own cell wall murein, and thus plays a role in cell wall recycling. The sequence is that of Anhydro-N-acetylmuramic acid kinase from Escherichia coli (strain K12 / MC4100 / BW2952).